The primary structure comprises 129 residues: Large ribosomal subunit protein bL19 (129 aa).

Belongs to the bacterial ribosomal protein bL19 family.

This protein is located at the 30S-50S ribosomal subunit interface and may play a role in the structure and function of the aminoacyl-tRNA binding site. In Bordetella avium (strain 197N), this protein is Large ribosomal subunit protein bL19.